The following is a 794-amino-acid chain: 6-hydroxypseudooxynicotine dehydrogenase complex subunit gamma (794 aa).

Heterohexamer of 2 alpha (kdhA), 2 beta (kdhB) and 2 gamma (kdhC) subunit. Dimer of heterotrimers. Mo-molybdopterin cytosine dinucleotide serves as cofactor.

It carries out the reaction 6-hydroxypseudooxynicotine + A + H2O = 2,6-dihydroxypseudooxynicotine + AH2. The protein operates within alkaloid degradation; nicotine degradation. Its function is as follows. Molybdo-flavoprotein enzyme complex involved in nicotine degradation. The subunit gamma (large subunit) contains the substrate-binding sites, the subunit alpha (medium subunit) binds FAD and the subunit beta (small subunit) has a 2Fe-2S ferredoxin-type domain which binds 2 2Fe-2S clusters. In Paenarthrobacter nicotinovorans (Arthrobacter nicotinovorans), this protein is 6-hydroxypseudooxynicotine dehydrogenase complex subunit gamma (kdhC).